Reading from the N-terminus, the 180-residue chain is Large ribosomal subunit protein uL6 (180 aa).

The protein belongs to the universal ribosomal protein uL6 family. As to quaternary structure, part of the 50S ribosomal subunit.

This protein binds to the 23S rRNA, and is important in its secondary structure. It is located near the subunit interface in the base of the L7/L12 stalk, and near the tRNA binding site of the peptidyltransferase center. In Thermus thermophilus (strain ATCC BAA-163 / DSM 7039 / HB27), this protein is Large ribosomal subunit protein uL6.